Here is a 386-residue protein sequence, read N- to C-terminus: uncharacterized protein (386 aa).

A disordered region spans residues 355–386 (PSEAQKVQVKSNKKPPIAPKPEHLKKRDHGLC). The segment covering 377-386 (HLKKRDHGLC) has biased composition (basic residues).

This is an uncharacterized protein from Rickettsia prowazekii (strain Madrid E).